Consider the following 370-residue polypeptide: Forkhead box protein J1.2 (370 aa).

A disordered region spans residues 45–74 (ANSRPPVPRVSQGPCSPPAGDTASCQAPRT). Positions 108-202 (KPPYSYATLI…VNGVLKRRRM (95 aa)) form a DNA-binding region, fork-head. The interval 227-246 (PGSHHMQHISGGHRQSRRYE) is disordered.

Belongs to the FOXJ1 family.

It localises to the nucleus. Functionally, key transcription factor required for motile ciliogenesis. Activates genes essential for motile cilia formation and function. This Xenopus laevis (African clawed frog) protein is Forkhead box protein J1.2.